A 1298-amino-acid polypeptide reads, in one-letter code: Ras guanine nucleotide exchange factor Q (1298 aa).

Disordered regions lie at residues M1–F26, N46–G88, N211–K271, Y314–Q384, and L459–T533. 2 stretches are compositionally biased toward low complexity: residues N211–N245 and T315–Q384. Residues S352–Y389 adopt a coiled-coil conformation. Residues L473 to S482 are compositionally biased toward polar residues. 2 stretches are compositionally biased toward low complexity: residues N483 to N501 and T508 to T533. An N-terminal Ras-GEF domain is found at D550–G689. In terms of domain architecture, DEP spans M723–T801. 2 disordered regions span residues S781–I864 and G884–F920. A compositionally biased stretch (low complexity) spans S783–I864. The Ras-GEF domain occupies H964–P1193. A disordered region spans residues T1214–N1267.

Functionally, promotes the exchange of Ras-bound GDP by GTP. Seems to play a role in chemotaxis. This Dictyostelium discoideum (Social amoeba) protein is Ras guanine nucleotide exchange factor Q (gefQ).